The following is a 151-amino-acid chain: Ubiquitin-like protein 4A-B (151 aa).

Positions 1–76 (MILTIKPLQG…LNLVVRPAGE (76 aa)) constitute a Ubiquitin-like domain.

In terms of assembly, component of the BAT3 complex.

It is found in the cytoplasm. The protein localises to the cytosol. In terms of biological role, component of the BAT3 complex, a multiprotein complex involved in the post-translational delivery of tail-anchored (TA) membrane proteins to the endoplasmic reticulum membrane. TA membrane proteins, also named type II transmembrane proteins, contain a single C-terminal transmembrane region. This is Ubiquitin-like protein 4A-B (ubl4ab) from Salmo salar (Atlantic salmon).